A 463-amino-acid polypeptide reads, in one-letter code: Argininosuccinate lyase (463 aa).

It belongs to the lyase 1 family. Argininosuccinate lyase subfamily.

The protein resides in the cytoplasm. The catalysed reaction is 2-(N(omega)-L-arginino)succinate = fumarate + L-arginine. It functions in the pathway amino-acid biosynthesis; L-arginine biosynthesis; L-arginine from L-ornithine and carbamoyl phosphate: step 3/3. This chain is Argininosuccinate lyase, found in Ruegeria pomeroyi (strain ATCC 700808 / DSM 15171 / DSS-3) (Silicibacter pomeroyi).